Here is a 672-residue protein sequence, read N- to C-terminus: tRNA 5-methylaminomethyl-2-thiouridine biosynthesis bifunctional protein MnmC (672 aa).

The tract at residues 1–243 (MTSITHAELG…KREMIAGCME (243 aa)) is tRNA (mnm(5)s(2)U34)-methyltransferase. Residues 269–672 (IGGGIASAAL…LRKGKAITEL (404 aa)) form an FAD-dependent cmnm(5)s(2)U34 oxidoreductase region.

It in the N-terminal section; belongs to the methyltransferase superfamily. tRNA (mnm(5)s(2)U34)-methyltransferase family. In the C-terminal section; belongs to the DAO family. Requires FAD as cofactor.

The protein resides in the cytoplasm. It carries out the reaction 5-aminomethyl-2-thiouridine(34) in tRNA + S-adenosyl-L-methionine = 5-methylaminomethyl-2-thiouridine(34) in tRNA + S-adenosyl-L-homocysteine + H(+). Its function is as follows. Catalyzes the last two steps in the biosynthesis of 5-methylaminomethyl-2-thiouridine (mnm(5)s(2)U) at the wobble position (U34) in tRNA. Catalyzes the FAD-dependent demodification of cmnm(5)s(2)U34 to nm(5)s(2)U34, followed by the transfer of a methyl group from S-adenosyl-L-methionine to nm(5)s(2)U34, to form mnm(5)s(2)U34. In Vibrio vulnificus (strain YJ016), this protein is tRNA 5-methylaminomethyl-2-thiouridine biosynthesis bifunctional protein MnmC.